The primary structure comprises 432 residues: Pachytene checkpoint protein 2 homolog (432 aa).

Position 1 is an N-acetylmethionine (Met1). 179 to 186 is an ATP binding site; that stretch reads GPPGTGKT.

Belongs to the AAA ATPase family. PCH2 subfamily. Specifically interacts with the ligand binding domain of the thyroid receptor (TR). This interaction does not require the presence of thyroid hormone for its interaction. Interacts with proteasome subunit PSMA8; to participate in meiosis progression during spermatogenesis.

Its function is as follows. Plays a key role in chromosome recombination and chromosome structure development during meiosis. Required at early steps in meiotic recombination that leads to non-crossovers pathways. Also needed for efficient completion of homologous synapsis by influencing crossover distribution along the chromosomes affecting both crossovers and non-crossovers pathways. Also required for development of higher-order chromosome structures and is needed for synaptonemal-complex formation. In males, required for efficient synapsis of the sex chromosomes and for sex body formation. Promotes early steps of the DNA double-strand breaks (DSBs) repair process upstream of the assembly of RAD51 complexes. Required for depletion of HORMAD1 and HORMAD2 from synapsed chromosomes. This Canis lupus familiaris (Dog) protein is Pachytene checkpoint protein 2 homolog (TRIP13).